The following is a 220-amino-acid chain: Probable GTP-binding protein EngB (220 aa).

Residues 31–205 (AGVEIAFAGR…LGILNEWCHP (175 aa)) form the EngB-type G domain. Residues 39–46 (GRSNAGKS), 66–70 (GRTQL), 84–87 (DLPG), 151–154 (TKAD), and 184–186 (FSS) contribute to the GTP site. S46 and T68 together coordinate Mg(2+).

This sequence belongs to the TRAFAC class TrmE-Era-EngA-EngB-Septin-like GTPase superfamily. EngB GTPase family. Mg(2+) is required as a cofactor.

In terms of biological role, necessary for normal cell division and for the maintenance of normal septation. This Shewanella sediminis (strain HAW-EB3) protein is Probable GTP-binding protein EngB.